Consider the following 130-residue polypeptide: Small ribosomal subunit protein uS8 (130 aa).

It belongs to the universal ribosomal protein uS8 family. In terms of assembly, part of the 30S ribosomal subunit. Contacts proteins S5 and S12.

Its function is as follows. One of the primary rRNA binding proteins, it binds directly to 16S rRNA central domain where it helps coordinate assembly of the platform of the 30S subunit. The polypeptide is Small ribosomal subunit protein uS8 (Pectobacterium atrosepticum (strain SCRI 1043 / ATCC BAA-672) (Erwinia carotovora subsp. atroseptica)).